The sequence spans 540 residues: L-aspartate oxidase (540 aa).

Residues 16–19 (SGAA), lysine 38, 45–52 (STFYAQGG), 161–162 (NA), and aspartate 223 each bind FAD. Residues histidine 244 and 259–260 (TE) contribute to the succinate site. Catalysis depends on arginine 290, which acts as the Proton donor/acceptor. Glutamate 375 is a binding site for FAD. Serine 389 is a binding site for succinate. 391–392 (SL) lines the FAD pocket.

It belongs to the FAD-dependent oxidoreductase 2 family. NadB subfamily. Monomer. Homodimer. Both the monomeric and dimeric forms of the enzyme are catalytically active. It depends on FAD as a cofactor.

It is found in the cytoplasm. It catalyses the reaction L-aspartate + O2 = iminosuccinate + H2O2. The catalysed reaction is fumarate + L-aspartate = iminosuccinate + succinate. It functions in the pathway cofactor biosynthesis; NAD(+) biosynthesis; iminoaspartate from L-aspartate (oxidase route): step 1/1. With respect to regulation, inhibited by the product iminoaspartate. Competitively inhibited by mesotartrate. NAD acts as a competitive inhibitor to FAD. Inhibited by iodoacetic acid, diethylpyrocarbonate and tetranitromethane. In terms of biological role, catalyzes the oxidation of L-aspartate to iminoaspartate, the first step in the de novo biosynthesis of NAD(+). Can use either oxygen or fumarate as electron acceptors, which allows the enzyme to be functional under aerobic and anaerobic conditions. In vivo, fumarate is used under anaerobic conditions, and oxygen is the predominant electron acceptor under aerobic conditions due to the lower fumarate levels. In vitro, fumarate is a more efficient electron acceptor and is kinetically superior to oxygen. The chain is L-aspartate oxidase from Escherichia coli (strain K12).